The following is a 188-amino-acid chain: COMM domain-containing protein 1 (188 aa).

Residues 1-122 (MAGDLEGGKS…RWDNGLRGLS (122 aa)) are sufficient for interaction with SLC12A2. The Cu cation site is built by His-100, Met-109, and His-133. Positions 117 to 185 (GLRGLSWRVD…EVEESINRLM (69 aa)) constitute a COMM domain. The segment at 124–188 (RVDGKSQSRH…ESINRLMQAA (65 aa)) is required for binding to PtdIns(4,5)P2.

This sequence belongs to the COMM domain-containing protein 1 family. As to quaternary structure, component of the commander complex consisting of the CCC subcomplex and the retriever subcomplex. Component of the CCC (COMMD/CCDC22/CCDC93) subcomplex consisting of COMMD1, COMMD2, COMMD3, COMMD4, COMMD5, COMMD6, COMMD7, COMMD8, COMMD9, COMMD10, CCDC22 and CCDC93; within the complex forms a heterodimer with COMMD6. Interacts with VPS35L; the interaction associates the CCC complex with the retriever complex. Identified in a complex with an E3 ubiquitin ligase complex composed of TCEB1/elongin C, CUL2, SOCS1 and RBX1; in the complex interacts directly with SOCS1 and CUL2. Identified in a complex with NF-kappa-B. Interacts directly with SLC12A2. Interacts directly with ATP7B (via the N-terminal region). Interacts with ATP7A. Interacts with FAM107A; this interaction stabilizes COMMD1 in the nucleus. Interacts with CCS, CDKN2A, RELA, REL, RELB, NFKB1/p105, NFKB2/p100, NFKBIB, SCNN1D, SCNN1B, CFTR, CLU, SGK1, AKT1, CUL1, CUL2, CUL3, CUL4A, CUL4B, CUL5, CUL7, HIF1A. In terms of processing, ubiquitinated; undergoes both 'Lys-63'- and 'Lys-48'-linked polyubiquitination. Ubiquitinated by XIAP, leading to its proteasomal degradation.

It localises to the nucleus. The protein resides in the cytoplasm. It is found in the endosome membrane. The protein localises to the cytoplasmic vesicle. Its subcellular location is the early endosome. It localises to the recycling endosome. In terms of biological role, scaffold protein in the commander complex that is essential for endosomal recycling of transmembrane cargos; the commander complex is composed of the CCC subcomplex and the retriever subcomplex. Can modulate activity of cullin-RING E3 ubiquitin ligase (CRL) complexes by displacing CAND1; in vitro promotes CRL E3 activity and dissociates CAND1 from CUL1 and CUL2. Promotes ubiquitination of NF-kappa-B subunit RELA and its subsequent proteasomal degradation. Down-regulates NF-kappa-B activity. Involved in the regulation of membrane expression and ubiquitination of SLC12A2. Modulates Na(+) transport in epithelial cells by regulation of apical cell surface expression of amiloride-sensitive sodium channel (ENaC) subunits and by promoting their ubiquitination presumably involving NEDD4L. Promotes the localization of SCNN1D to recycling endosomes. Promotes CFTR cell surface expression through regulation of its ubiquitination. Down-regulates SOD1 activity by interfering with its homodimerization. Plays a role in copper ion homeostasis. Involved in copper-dependent ATP7A trafficking between the trans-Golgi network and vesicles in the cell periphery; the function is proposed to depend on its association within the CCC complex and cooperation with the WASH complex on early endosomes. Can bind one copper ion per monomer. May function to facilitate biliary copper excretion within hepatocytes. Binds to phosphatidylinositol 4,5-bisphosphate (PtdIns(4,5)P2). Involved in the regulation of HIF1A-mediated transcription; competes with ARNT/Hif-1-beta for binding to HIF1A resulting in decreased DNA binding and impaired transcriptional activation by HIF-1. Negatively regulates neuroblastoma G1/S phase cell cycle progression and cell proliferation by stimulating ubiquitination of NF-kappa-B subunit RELA and NF-kappa-B degradation in a FAM107A- and actin-dependent manner. This is COMM domain-containing protein 1 (Commd1) from Mus musculus (Mouse).